Reading from the N-terminus, the 42-residue chain is MSNTGTTGRIPLWLVGTVVGTLAIGLLAVFFYGSYVGLGSSL.

Residues 10–30 traverse the membrane as a helical segment; sequence IPLWLVGTVVGTLAIGLLAVF.

The protein belongs to the PsbJ family. In terms of assembly, PSII is composed of 1 copy each of membrane proteins PsbA, PsbB, PsbC, PsbD, PsbE, PsbF, PsbH, PsbI, PsbJ, PsbK, PsbL, PsbM, PsbT, PsbX, PsbY, PsbZ, Psb30/Ycf12, at least 3 peripheral proteins of the oxygen-evolving complex and a large number of cofactors. It forms dimeric complexes.

It is found in the plastid. The protein localises to the chloroplast thylakoid membrane. In terms of biological role, one of the components of the core complex of photosystem II (PSII). PSII is a light-driven water:plastoquinone oxidoreductase that uses light energy to abstract electrons from H(2)O, generating O(2) and a proton gradient subsequently used for ATP formation. It consists of a core antenna complex that captures photons, and an electron transfer chain that converts photonic excitation into a charge separation. The sequence is that of Photosystem II reaction center protein J from Chlamydomonas reinhardtii (Chlamydomonas smithii).